The following is a 159-amino-acid chain: Putative transmembrane protein ORF159 (159 aa).

Helical transmembrane passes span 20–40 (LLLS…LSLF) and 59–79 (IIAV…GFCC). Positions 106–108 (RGD) match the Cell attachment site motif.

It localises to the host membrane. The chain is Putative transmembrane protein ORF159 from Acidianus sp. F28 (AFV-2).